The primary structure comprises 418 residues: Tyrosine--tRNA ligase (418 aa).

Tyr-34 is an L-tyrosine binding site. Positions 39–48 (PTADSLHLGH) match the 'HIGH' region motif. 2 residues coordinate L-tyrosine: Tyr-169 and Gln-173. The 'KMSKS' region signature appears at 229–233 (KFGKS). Residue Lys-232 participates in ATP binding. The 67-residue stretch at 352 to 418 (LNIVDMLVTA…GKKKYAVLTY (67 aa)) folds into the S4 RNA-binding domain.

It belongs to the class-I aminoacyl-tRNA synthetase family. TyrS type 1 subfamily. In terms of assembly, homodimer.

It localises to the cytoplasm. The enzyme catalyses tRNA(Tyr) + L-tyrosine + ATP = L-tyrosyl-tRNA(Tyr) + AMP + diphosphate + H(+). Functionally, catalyzes the attachment of tyrosine to tRNA(Tyr) in a two-step reaction: tyrosine is first activated by ATP to form Tyr-AMP and then transferred to the acceptor end of tRNA(Tyr). This Streptococcus equi subsp. equi (strain 4047) protein is Tyrosine--tRNA ligase.